The chain runs to 207 residues: N-(5'-phosphoribosyl)anthranilate isomerase (207 aa).

The protein belongs to the TrpF family.

The catalysed reaction is N-(5-phospho-beta-D-ribosyl)anthranilate = 1-(2-carboxyphenylamino)-1-deoxy-D-ribulose 5-phosphate. It functions in the pathway amino-acid biosynthesis; L-tryptophan biosynthesis; L-tryptophan from chorismate: step 3/5. In Petrotoga mobilis (strain DSM 10674 / SJ95), this protein is N-(5'-phosphoribosyl)anthranilate isomerase.